The chain runs to 230 residues: 5'-methylthioadenosine/S-adenosylhomocysteine nucleosidase (230 aa).

The active-site Proton acceptor is glutamate 12. Residues glycine 78, isoleucine 152, and 173-174 contribute to the substrate site; that span reads ME. Residue aspartate 197 is the Proton donor of the active site.

Belongs to the PNP/UDP phosphorylase family. MtnN subfamily.

It catalyses the reaction S-adenosyl-L-homocysteine + H2O = S-(5-deoxy-D-ribos-5-yl)-L-homocysteine + adenine. The catalysed reaction is S-methyl-5'-thioadenosine + H2O = 5-(methylsulfanyl)-D-ribose + adenine. The enzyme catalyses 5'-deoxyadenosine + H2O = 5-deoxy-D-ribose + adenine. Its pathway is amino-acid biosynthesis; L-methionine biosynthesis via salvage pathway; S-methyl-5-thio-alpha-D-ribose 1-phosphate from S-methyl-5'-thioadenosine (hydrolase route): step 1/2. Its function is as follows. Catalyzes the irreversible cleavage of the glycosidic bond in both 5'-methylthioadenosine (MTA) and S-adenosylhomocysteine (SAH/AdoHcy) to adenine and the corresponding thioribose, 5'-methylthioribose and S-ribosylhomocysteine, respectively. Also cleaves 5'-deoxyadenosine, a toxic by-product of radical S-adenosylmethionine (SAM) enzymes, into 5-deoxyribose and adenine. This chain is 5'-methylthioadenosine/S-adenosylhomocysteine nucleosidase, found in Haemophilus influenzae (strain 86-028NP).